A 141-amino-acid polypeptide reads, in one-letter code: Probable trafficking protein particle complex subunit 2 (141 aa).

This sequence belongs to the TRAPP small subunits family. Sedlin subfamily. As to quaternary structure, part of the multisubunit TRAPP (transport protein particle) complex.

The protein localises to the cytoplasm. It localises to the perinuclear region. It is found in the endoplasmic reticulum. Its subcellular location is the golgi apparatus. Functionally, may play a role in vesicular transport from endoplasmic reticulum to Golgi. Required for the systemic spread of the RNAi response. The sequence is that of Probable trafficking protein particle complex subunit 2 (sedl-1) from Caenorhabditis elegans.